Here is a 596-residue protein sequence, read N- to C-terminus: Probable translation initiation factor IF-2 (596 aa).

Residues 3-220 (IRSPIVSVLG…MLLGLAQEYL (218 aa)) enclose the tr-type G domain. A G1 region spans residues 12–19 (GHVDHGKT). 12 to 19 (GHVDHGKT) contributes to the GTP binding site. Residues 37–41 (GITQH) are G2. The interval 76-79 (DTPG) is G3. GTP-binding positions include 76 to 80 (DTPGH) and 130 to 133 (NKID). The tract at residues 130 to 133 (NKID) is G4. A G5 region spans residues 198–200 (SAK).

Belongs to the TRAFAC class translation factor GTPase superfamily. Classic translation factor GTPase family. IF-2 subfamily.

In terms of biological role, function in general translation initiation by promoting the binding of the formylmethionine-tRNA to ribosomes. Seems to function along with eIF-2. This Methanobrevibacter smithii (strain ATCC 35061 / DSM 861 / OCM 144 / PS) protein is Probable translation initiation factor IF-2.